The primary structure comprises 302 residues: Nucleotide-binding protein SE_0548 (302 aa).

Residue 18 to 25 (GMSGAGKS) participates in ATP binding. Position 69-72 (69-72 (DLRG)) interacts with GTP.

This sequence belongs to the RapZ-like family.

Its function is as follows. Displays ATPase and GTPase activities. This Staphylococcus epidermidis (strain ATCC 12228 / FDA PCI 1200) protein is Nucleotide-binding protein SE_0548.